The following is a 261-amino-acid chain: ATP synthase subunit a (261 aa).

8 helical membrane passes run 30–50, 63–83, 96–116, 125–145, 151–171, 187–207, 214–234, and 235–255; these read VLFT…GLFM, WQVA…ANIG, LFMF…VLGL, IAIT…VGFW, FFSL…IAPI, LFVA…FVIN, LWLG…ISAL, and ELLV…LYIN.

This sequence belongs to the ATPase A chain family. F-type ATPases have 2 components, CF(1) - the catalytic core - and CF(0) - the membrane proton channel. CF(1) has five subunits: alpha(3), beta(3), gamma(1), delta(1), epsilon(1). CF(0) has three main subunits: a(1), b(2) and c(9-12). The alpha and beta chains form an alternating ring which encloses part of the gamma chain. CF(1) is attached to CF(0) by a central stalk formed by the gamma and epsilon chains, while a peripheral stalk is formed by the delta and b chains.

Its subcellular location is the cell inner membrane. Its function is as follows. Key component of the proton channel; it plays a direct role in the translocation of protons across the membrane. In Sphingopyxis alaskensis (strain DSM 13593 / LMG 18877 / RB2256) (Sphingomonas alaskensis), this protein is ATP synthase subunit a.